The sequence spans 119 residues: Beta-2-microglobulin (119 aa).

The first 20 residues, 1–20 (MARFVAVALLVLLSLSGLET), serve as a signal peptide directing secretion. The 90-residue stretch at 25–114 (PKIQVYSRHP…VTFSTPKTVK (90 aa)) folds into the Ig-like C1-type domain. Cysteine 45 and cysteine 100 are disulfide-bonded.

It belongs to the beta-2-microglobulin family. Heterodimer of an alpha chain and a beta chain. Beta-2-microglobulin is the beta-chain of major histocompatibility complex class I molecules.

It is found in the secreted. Component of the class I major histocompatibility complex (MHC). Involved in the presentation of peptide antigens to the immune system. The chain is Beta-2-microglobulin (B2M) from Callicebus personatus personatus (Masked titi).